The chain runs to 416 residues: Serine hydroxymethyltransferase (416 aa).

(6S)-5,6,7,8-tetrahydrofolate is bound by residues Leu121 and 125–127; that span reads GHL. Lys229 carries the N6-(pyridoxal phosphate)lysine modification. (6S)-5,6,7,8-tetrahydrofolate-binding positions include Glu245 and 354–356; that span reads SPF.

It belongs to the SHMT family. As to quaternary structure, homodimer. The cofactor is pyridoxal 5'-phosphate.

The protein resides in the cytoplasm. The enzyme catalyses (6R)-5,10-methylene-5,6,7,8-tetrahydrofolate + glycine + H2O = (6S)-5,6,7,8-tetrahydrofolate + L-serine. It functions in the pathway one-carbon metabolism; tetrahydrofolate interconversion. The protein operates within amino-acid biosynthesis; glycine biosynthesis; glycine from L-serine: step 1/1. Functionally, catalyzes the reversible interconversion of serine and glycine with tetrahydrofolate (THF) serving as the one-carbon carrier. This reaction serves as the major source of one-carbon groups required for the biosynthesis of purines, thymidylate, methionine, and other important biomolecules. Also exhibits THF-independent aldolase activity toward beta-hydroxyamino acids, producing glycine and aldehydes, via a retro-aldol mechanism. In Aliivibrio salmonicida (strain LFI1238) (Vibrio salmonicida (strain LFI1238)), this protein is Serine hydroxymethyltransferase.